A 313-amino-acid polypeptide reads, in one-letter code: UPF0761 membrane protein VV0203 (313 aa).

6 consecutive transmembrane segments (helical) span residues Tyr41–Leu61, Met104–Asp124, Ala139–Ala159, Leu185–Val205, Ala215–Ala235, and Ala249–Ile269. Residues Leu293–Ser313 are disordered. The segment covering Glu299 to Ser313 has biased composition (basic and acidic residues).

Belongs to the UPF0761 family.

It is found in the cell inner membrane. This is UPF0761 membrane protein VV0203 from Vibrio vulnificus (strain YJ016).